The chain runs to 213 residues: ATP phosphoribosyltransferase (213 aa).

The protein belongs to the ATP phosphoribosyltransferase family. Short subfamily. In terms of assembly, heteromultimer composed of HisG and HisZ subunits.

The protein localises to the cytoplasm. The enzyme catalyses 1-(5-phospho-beta-D-ribosyl)-ATP + diphosphate = 5-phospho-alpha-D-ribose 1-diphosphate + ATP. The protein operates within amino-acid biosynthesis; L-histidine biosynthesis; L-histidine from 5-phospho-alpha-D-ribose 1-diphosphate: step 1/9. In terms of biological role, catalyzes the condensation of ATP and 5-phosphoribose 1-diphosphate to form N'-(5'-phosphoribosyl)-ATP (PR-ATP). Has a crucial role in the pathway because the rate of histidine biosynthesis seems to be controlled primarily by regulation of HisG enzymatic activity. The polypeptide is ATP phosphoribosyltransferase (Synechococcus sp. (strain RCC307)).